A 286-amino-acid chain; its full sequence is Bark agglutinin I polypeptide B (286 aa).

Positions 1-31 are cleaved as a signal peptide; the sequence is MASYKFKTQNSFLLLLSISFFFLLLLNKVNS. N-linked (GlcNAc...) asparagine glycosylation is present at asparagine 148. Residues glutamate 157 and aspartate 159 each contribute to the Mn(2+) site. Ca(2+) is bound by residues aspartate 159, asparagine 163, and aspartate 167. 2 residues coordinate Mn(2+): aspartate 167 and histidine 172.

Belongs to the leguminous lectin family. In terms of assembly, RPbAI is composed of two polypeptides, A and B, that associate into five different tetrameric isolectins. The A4 combination is the only one devoid of agglutination activity. Isoform B4 displays maximal agglutination activity. Mostly in the axial and ray parenchymal cells of the inner bark. Fewer in the axial and ray parenchymal cells of the xylem. Strong expression in bark. The lectin accumulates in the inner bark in autumn and winter and disappears in may.

Bark lectins are storage proteins that probably maintain stocks of nitrogen during dormant period. Self-aggregatable molecules that can bind their own carbohydrate side chains. They could also play a role in the plant's defense against phytophagous invertebrates or herbivorous higher animals. This Robinia pseudoacacia (Black locust) protein is Bark agglutinin I polypeptide B.